The primary structure comprises 83 residues: Small ribosomal subunit protein bS16 (83 aa).

The protein belongs to the bacterial ribosomal protein bS16 family.

The sequence is that of Small ribosomal subunit protein bS16 from Finegoldia magna (strain ATCC 29328 / DSM 20472 / WAL 2508) (Peptostreptococcus magnus).